The following is a 225-amino-acid chain: NAD(P)H-quinone oxidoreductase subunit K, chloroplastic (225 aa).

[4Fe-4S] cluster-binding residues include cysteine 43, cysteine 44, cysteine 108, and cysteine 139.

This sequence belongs to the complex I 20 kDa subunit family. As to quaternary structure, NDH is composed of at least 16 different subunits, 5 of which are encoded in the nucleus. [4Fe-4S] cluster serves as cofactor.

It localises to the plastid. It is found in the chloroplast thylakoid membrane. The enzyme catalyses a plastoquinone + NADH + (n+1) H(+)(in) = a plastoquinol + NAD(+) + n H(+)(out). It catalyses the reaction a plastoquinone + NADPH + (n+1) H(+)(in) = a plastoquinol + NADP(+) + n H(+)(out). NDH shuttles electrons from NAD(P)H:plastoquinone, via FMN and iron-sulfur (Fe-S) centers, to quinones in the photosynthetic chain and possibly in a chloroplast respiratory chain. The immediate electron acceptor for the enzyme in this species is believed to be plastoquinone. Couples the redox reaction to proton translocation, and thus conserves the redox energy in a proton gradient. The chain is NAD(P)H-quinone oxidoreductase subunit K, chloroplastic from Carica papaya (Papaya).